A 551-amino-acid chain; its full sequence is Membrane protein insertase YidC (551 aa).

The helical transmembrane segment at 3–23 threads the bilayer; the sequence is ANHIRILLLVTIAIMFISLMG. A compositionally biased stretch (polar residues) spans 33–47; it reads NTKQQTSATQNNSHY. Residues 33-59 are disordered; sequence NTKQQTSATQNNSHYDNADSSTNTDVT. Positions 50–59 are enriched in low complexity; sequence ADSSTNTDVT. A run of 3 helical transmembrane segments spans residues 361-381, 431-451, and 504-524; these read LVGNWGLAIILVTCLIKLIFY, LSGCLPMLIQIPIFISLYWVL, and VMMFLPVIFTFLFASFPSGLV.

The protein belongs to the OXA1/ALB3/YidC family. Type 1 subfamily. Interacts with the Sec translocase complex via SecD. Specifically interacts with transmembrane segments of nascent integral membrane proteins during membrane integration.

It is found in the cell inner membrane. Its function is as follows. Required for the insertion and/or proper folding and/or complex formation of integral membrane proteins into the membrane. Involved in integration of membrane proteins that insert both dependently and independently of the Sec translocase complex, as well as at least some lipoproteins. Aids folding of multispanning membrane proteins. This chain is Membrane protein insertase YidC, found in Francisella tularensis subsp. mediasiatica (strain FSC147).